The sequence spans 516 residues: Bifunctional purine biosynthesis protein PurH (516 aa).

One can recognise an MGS-like domain in the interval 1 to 149; it reads MSERQPIRRA…KNHANVAVLT (149 aa).

The protein belongs to the PurH family.

It catalyses the reaction (6R)-10-formyltetrahydrofolate + 5-amino-1-(5-phospho-beta-D-ribosyl)imidazole-4-carboxamide = 5-formamido-1-(5-phospho-D-ribosyl)imidazole-4-carboxamide + (6S)-5,6,7,8-tetrahydrofolate. The catalysed reaction is IMP + H2O = 5-formamido-1-(5-phospho-D-ribosyl)imidazole-4-carboxamide. Its pathway is purine metabolism; IMP biosynthesis via de novo pathway; 5-formamido-1-(5-phospho-D-ribosyl)imidazole-4-carboxamide from 5-amino-1-(5-phospho-D-ribosyl)imidazole-4-carboxamide (10-formyl THF route): step 1/1. The protein operates within purine metabolism; IMP biosynthesis via de novo pathway; IMP from 5-formamido-1-(5-phospho-D-ribosyl)imidazole-4-carboxamide: step 1/1. The protein is Bifunctional purine biosynthesis protein PurH of Cutibacterium acnes (strain DSM 16379 / KPA171202) (Propionibacterium acnes).